We begin with the raw amino-acid sequence, 312 residues long: MVRVYAPASIANIGVGFDTLGMAIAPINGSLLGDCISIEHANAFSLRSTGFFHSQLPIQLEENIVFQCWRKFCEILGQTYFLSIKLEKNIPVASGLGSSACSIVAVLVAMNYHCGCPLNTDQLLMLMGEMEGKISGSIHFDNVSPCFLGGMRLILQNCNIVNQVIPSFDDWLWIVAYPGIKISTAVSRSVLPNKYDREDCINHSQYLSGFVHACHTKQEYLAIRCMKDIIAEPYRSRLFPIELSCIRHNIMKRGAISCGISGSGPTVFVLCNNHDVIGDISDWLSRFYLQNNSGFIRICSLDNLGARIMVNN.

Residue 91-101 coordinates ATP; sequence PVASGLGSSAC.

It belongs to the GHMP kinase family. Homoserine kinase subfamily.

The protein resides in the cytoplasm. It carries out the reaction L-homoserine + ATP = O-phospho-L-homoserine + ADP + H(+). Its pathway is amino-acid biosynthesis; L-threonine biosynthesis; L-threonine from L-aspartate: step 4/5. Its function is as follows. Catalyzes the ATP-dependent phosphorylation of L-homoserine to L-homoserine phosphate. This chain is Homoserine kinase, found in Blochmanniella pennsylvanica (strain BPEN).